Reading from the N-terminus, the 125-residue chain is Fluoride-specific ion channel FluC (125 aa).

4 helical membrane passes run 2–22 (WLSI…RTGF), 35–55 (LGTL…LAFF), 68–88 (LIIT…AEVV), and 98–118 (WALG…LLGI). Positions 75 and 78 each coordinate Na(+).

The protein belongs to the fluoride channel Fluc/FEX (TC 1.A.43) family.

Its subcellular location is the cell inner membrane. It catalyses the reaction fluoride(in) = fluoride(out). With respect to regulation, na(+) is not transported, but it plays an essential structural role and its presence is essential for fluoride channel function. In terms of biological role, fluoride-specific ion channel. Important for reducing fluoride concentration in the cell, thus reducing its toxicity. The chain is Fluoride-specific ion channel FluC from Polynucleobacter asymbioticus (strain DSM 18221 / CIP 109841 / QLW-P1DMWA-1) (Polynucleobacter necessarius subsp. asymbioticus).